Consider the following 170-residue polypeptide: UPF0260 protein RPE_1881 (170 aa).

Belongs to the UPF0260 family.

This chain is UPF0260 protein RPE_1881, found in Rhodopseudomonas palustris (strain BisA53).